A 591-amino-acid polypeptide reads, in one-letter code: PDZ and LIM domain protein 5 (591 aa).

The residue at position 2 (serine 2) is an N-acetylserine. Serine 2 carries the phosphoserine modification. The PDZ domain occupies 2 to 85 (SNYSVSLVGP…SLNMTLQRAS (84 aa)). An N6-acetyllysine; alternate modification is found at lysine 89. Lysine 89 is modified (N6-succinyllysine; alternate). A Glycyl lysine isopeptide (Lys-Gly) (interchain with G-Cter in SUMO2); alternate cross-link involves residue lysine 89. Phosphoserine is present on residues glutamate 102, lysine 105, serine 111, serine 134, and serine 137. 2 disordered regions span residues 121–166 (TNMA…PTPV) and 186–398 (SADQ…DQDT). Residues 134–143 (SVSSPKVTSI) are compositionally biased toward polar residues. The segment covering 144 to 166 (PSPSSAFTPAHAATSSHASPTPV) has biased composition (low complexity). 2 stretches are compositionally biased toward polar residues: residues 186–195 (SADQCSSPPN) and 205–217 (RQPT…SESA). Phosphoserine occurs at positions 218, 228, and 260. 2 stretches are compositionally biased toward basic and acidic residues: residues 258-273 (DASK…DWRP) and 294-304 (HLTESENDNTK). A compositionally biased stretch (low complexity) spans 310-339 (QEPSQQPASSGASPLSASEGPESPGSSRPS). Residues serine 313, proline 316, and serine 322 each carry the phosphoserine modification. Lysine 350 bears the N6-acetyllysine mark. Residues 353 to 385 (GSTSVKSPSWQRPNQAAPSTGRISNNARSSGTG) are compositionally biased toward polar residues. Phosphoserine is present on residues serine 359 and serine 361. 3 LIM zinc-binding domains span residues 413 to 472 (PMCA…FFAP), 472 to 531 (PECG…LFGT), and 531 to 591 (TICR…SVNF).

As to quaternary structure, interacts with various PKC isoforms through the LIM domains. Interacts with actin and alpha-actinin through the PDZ domain. Interacts (via LIM domains) with SIPA1L1/SPAR; this interaction may occur preferentially with isoform 1.

It localises to the postsynaptic density. It is found in the presynapse. The protein localises to the postsynapse. Its subcellular location is the cytoplasm. The protein resides in the cytosol. Functionally, may play an important role in the heart development by scaffolding PKC to the Z-disk region. May play a role in the regulation of cardiomyocyte expansion. Isoforms lacking the LIM domains may negatively modulate the scaffolding activity of isoform 1. Overexpression promotes the development of heart hypertrophy. Contributes to the regulation of dendritic spine morphogenesis in neurons. May be required to restrain postsynaptic growth of excitatory synapses. Isoform 1, but not isoform 2, expression favors spine thinning and elongation. The sequence is that of PDZ and LIM domain protein 5 from Mus musculus (Mouse).